The sequence spans 257 residues: GTP cyclohydrolase FolE2 (257 aa).

The protein belongs to the GTP cyclohydrolase IV family.

It catalyses the reaction GTP + H2O = 7,8-dihydroneopterin 3'-triphosphate + formate + H(+). Its pathway is cofactor biosynthesis; 7,8-dihydroneopterin triphosphate biosynthesis; 7,8-dihydroneopterin triphosphate from GTP: step 1/1. Its function is as follows. Converts GTP to 7,8-dihydroneopterin triphosphate. This Pelobacter propionicus (strain DSM 2379 / NBRC 103807 / OttBd1) protein is GTP cyclohydrolase FolE2.